A 512-amino-acid chain; its full sequence is Threonine synthase (512 aa).

The residue at position 121 (Lys-121) is an N6-(pyridoxal phosphate)lysine. Pyridoxal 5'-phosphate contacts are provided by Gly-273, Asn-274, Phe-275, Asp-277, and Thr-445.

The protein belongs to the threonine synthase family. Pyridoxal 5'-phosphate serves as cofactor.

It catalyses the reaction O-phospho-L-homoserine + H2O = L-threonine + phosphate. It participates in amino-acid biosynthesis; L-threonine biosynthesis; L-threonine from L-aspartate: step 5/5. In terms of biological role, catalyzes the gamma-elimination of phosphate from L-phosphohomoserine and the beta-addition of water to produce L-threonine. In Eremothecium gossypii (strain ATCC 10895 / CBS 109.51 / FGSC 9923 / NRRL Y-1056) (Yeast), this protein is Threonine synthase (THR4).